The primary structure comprises 370 residues: Putative alanine racemase 2 (370 aa).

Lys-38 functions as the Proton acceptor; specific for D-alanine in the catalytic mechanism. Lys-38 is modified (N6-(pyridoxal phosphate)lysine). Residue Tyr-266 is the Proton acceptor; specific for L-alanine of the active site.

This sequence belongs to the alanine racemase family. Requires pyridoxal 5'-phosphate as cofactor.

It carries out the reaction L-alanine = D-alanine. In Schizosaccharomyces pombe (strain 972 / ATCC 24843) (Fission yeast), this protein is Putative alanine racemase 2 (alr2).